The primary structure comprises 217 residues: Cytidylate kinase (217 aa).

An ATP-binding site is contributed by 9–17 (GPSSSGKSS).

The protein belongs to the cytidylate kinase family. Type 1 subfamily.

It localises to the cytoplasm. The enzyme catalyses CMP + ATP = CDP + ADP. The catalysed reaction is dCMP + ATP = dCDP + ADP. This Mycoplasma genitalium (strain ATCC 33530 / DSM 19775 / NCTC 10195 / G37) (Mycoplasmoides genitalium) protein is Cytidylate kinase.